A 201-amino-acid chain; its full sequence is Probable nicotinate-nucleotide adenylyltransferase (201 aa).

Belongs to the NadD family.

It carries out the reaction nicotinate beta-D-ribonucleotide + ATP + H(+) = deamido-NAD(+) + diphosphate. Its pathway is cofactor biosynthesis; NAD(+) biosynthesis; deamido-NAD(+) from nicotinate D-ribonucleotide: step 1/1. Functionally, catalyzes the reversible adenylation of nicotinate mononucleotide (NaMN) to nicotinic acid adenine dinucleotide (NaAD). The protein is Probable nicotinate-nucleotide adenylyltransferase of Carboxydothermus hydrogenoformans (strain ATCC BAA-161 / DSM 6008 / Z-2901).